A 100-amino-acid chain; its full sequence is Large ribosomal subunit protein uL23 (100 aa).

Belongs to the universal ribosomal protein uL23 family. As to quaternary structure, part of the 50S ribosomal subunit. Contacts protein L29, and trigger factor when it is bound to the ribosome.

Its function is as follows. One of the early assembly proteins it binds 23S rRNA. One of the proteins that surrounds the polypeptide exit tunnel on the outside of the ribosome. Forms the main docking site for trigger factor binding to the ribosome. This is Large ribosomal subunit protein uL23 from Vibrio atlanticus (strain LGP32) (Vibrio splendidus (strain Mel32)).